Reading from the N-terminus, the 279-residue chain is MKNWKEIIHHQTFRYIDHSTQTDIEGKPNTALTSFAVDDTLAISVSEETSPPVIRLWVHSKTIVLGIPDSRLPFIDSGMQFIEQNNYQAVVRNSGGLAVALDEGVLNISLIIPGGKNLSIYDCYEAMVRFIQAMFHDLTNDIKAYEIVGSYCPGDYDLSIGGRKFAGISQRRVKNGISVQIYLDVEGNSNQRAEVIREFYNKGKKNMETSFTYPDVDPKVMGSLSELLGVALTVDDVQKRVVHTLEKLSDEIVEIPFQEEEIVNFKKRYKQMVKRNESN.

The BPL/LPL catalytic domain occupies 48-253 (ETSPPVIRLW…TLEKLSDEIV (206 aa)). Catalysis depends on Cys-152, which acts as the Acyl-thioester intermediate.

Belongs to the octanoyltransferase LipL family.

It carries out the reaction N(6)-octanoyl-L-lysyl-[glycine-cleavage complex H protein] + L-lysyl-[lipoyl-carrier protein] = N(6)-octanoyl-L-lysyl-[lipoyl-carrier protein] + L-lysyl-[glycine-cleavage complex H protein]. It participates in protein modification; protein lipoylation via endogenous pathway; protein N(6)-(lipoyl)lysine from octanoyl-[acyl-carrier-protein]. In terms of biological role, catalyzes the amidotransfer (transamidation) of the octanoyl moiety from octanoyl-GcvH to the lipoyl domain of the E2 subunit of lipoate-dependent enzymes. This is Octanoyl-[GcvH]:protein N-octanoyltransferase from Oceanobacillus iheyensis (strain DSM 14371 / CIP 107618 / JCM 11309 / KCTC 3954 / HTE831).